A 930-amino-acid polypeptide reads, in one-letter code: Xanthan lyase (930 aa).

An N-terminal signal peptide occupies residues 1–25; sequence MLSGILIAALLMTLWGGWQPDIAHA. Xanthan-binding positions include 146–148, histidine 246, tyrosine 255, arginine 309, 313–315, and asparagine 424; these read NWW and RSY. Residue tyrosine 255 is the Proton donor/acceptor of the active site. Ca(2+) is bound by residues aspartate 515, aspartate 516, and glutamate 517. Arginine 612 contacts xanthan. Ca(2+) is bound at residue glutamate 676.

This sequence belongs to the polysaccharide lyase 8 family. As to quaternary structure, monomer.

It is found in the secreted. It carries out the reaction Eliminative cleavage of the terminal beta-D-mannosyl-(1-&gt;4)-beta-D-glucuronosyl linkage of the side-chain of the polysaccharide xanthan, leaving a 4-deoxy-alpha-L-threo-hex-4-enuronosyl group at the terminus of the side-chain.. Activated by Co(2+) at 1 mM. Completely inhibited by Hg(2+) but not affected by other divalent cations. Intensely inhibited by NaCl and KCl at 150 mM, in particular by the Na(+) and K(+) ions but not the Cl(-) ions. Partially inhibited by iodoacetamide and N-ethylmaleimide at 1 mM but not by dithiothreitol, reduced glutathione or 2-mercaptoethanol. In terms of biological role, plays a role in xanthan depolymerization pathway by cleaving the linkage between the terminal mannosyl and glucuronyl residues of the side chain of xanthan to liberate pyruvylated mannose. Is highly specific for pyruvylated side-chains of xanthan and is not effective with hyaluronate, chondroitin A, gellan, heparin or pectin. In Bacillus sp. (strain GL1), this protein is Xanthan lyase.